The chain runs to 425 residues: Glutamyl-tRNA reductase (425 aa).

Substrate is bound by residues 49 to 52, Ser109, 114 to 116, and Gln120; these read TCNR and EGQ. Cys50 acts as the Nucleophile in catalysis. 189–194 is an NADP(+) binding site; it reads GAGETG.

This sequence belongs to the glutamyl-tRNA reductase family. Homodimer.

It catalyses the reaction (S)-4-amino-5-oxopentanoate + tRNA(Glu) + NADP(+) = L-glutamyl-tRNA(Glu) + NADPH + H(+). It functions in the pathway porphyrin-containing compound metabolism; protoporphyrin-IX biosynthesis; 5-aminolevulinate from L-glutamyl-tRNA(Glu): step 1/2. It participates in porphyrin-containing compound metabolism; chlorophyll biosynthesis. Catalyzes the NADPH-dependent reduction of glutamyl-tRNA(Glu) to glutamate 1-semialdehyde (GSA). The protein is Glutamyl-tRNA reductase of Chlorobium luteolum (strain DSM 273 / BCRC 81028 / 2530) (Pelodictyon luteolum).